We begin with the raw amino-acid sequence, 387 residues long: Putative ankyrin repeat protein RBE_0984 (387 aa).

ANK repeat units follow at residues 50–79 (YGNT…DKDI), 88–119 (HRET…AINV), 123–154 (RKHT…VINV), 159–188 (HKDS…KENI), and 210–239 (VCKM…LKGE). Coiled-coil stretches lie at residues 251–278 (FEDI…KKCE) and 311–352 (SISA…ALEK).

This chain is Putative ankyrin repeat protein RBE_0984, found in Rickettsia bellii (strain RML369-C).